Here is a 280-residue protein sequence, read N- to C-terminus: Putative transcription factor kapC (280 aa).

The interval 1 to 102 (MQPALAPHPS…GKRPLSTSKR (102 aa)) is disordered. The span at 39–49 (PQPPAPQPPHM) shows a compositional bias: pro residues. The segment covering 79-89 (TQPDVTGQETP) has biased composition (polar residues). Residues 96-159 (PLSTSKRAAQ…EYIINLQSRL (64 aa)) form the bZIP domain. The interval 97-120 (LSTSKRAAQNRAAQRAFRQRKEAH) is basic motif. The segment at 124-155 (LEGKVKAYESMGEAIKALQAENYQLREYIINL) is leucine-zipper. Positions 169-280 (LPGNIDLSQP…EQTHGLPLIS (112 aa)) are disordered. Residues 197 to 206 (APPPTAPQQP) are compositionally biased toward pro residues.

Belongs to the bZIP family.

Its subcellular location is the nucleus. Its function is as follows. Putative transcription factor. This chain is Putative transcription factor kapC (kapC), found in Aspergillus fumigatus (strain ATCC MYA-4609 / CBS 101355 / FGSC A1100 / Af293) (Neosartorya fumigata).